We begin with the raw amino-acid sequence, 197 residues long: Small ribosomal subunit protein uS5 (197 aa).

Basic and acidic residues predominate over residues 1–17; that stretch reads MAERENRGRGRGRNREE. 2 disordered regions span residues 1 to 22 and 158 to 197; these read MAER…TPEF and NESS…SEEA. An S5 DRBM domain is found at 22–85; the sequence is FADRLVAINR…EQAKRQLIRV (64 aa). A compositionally biased stretch (basic and acidic residues) spans 172 to 186; it reads KVADILPKRDDHPQI.

The protein belongs to the universal ribosomal protein uS5 family. Part of the 30S ribosomal subunit. Contacts proteins S4 and S8.

With S4 and S12 plays an important role in translational accuracy. Its function is as follows. Located at the back of the 30S subunit body where it stabilizes the conformation of the head with respect to the body. The protein is Small ribosomal subunit protein uS5 of Jannaschia sp. (strain CCS1).